The sequence spans 190 residues: Protein A52 (190 aa).

This sequence belongs to the orthopoxvirus A52R protein family. In terms of assembly, interacts with host TRAF6 and IRAK2.

In terms of biological role, bcl-2-like protein which targets host toll-like receptor signaling complexes to suppress innate immune response. Interacts with host TRAF6 to activate p38 and subsequently induce the expression of several cytokines such as IL-10. Also associates with host IRAK2 to inhibit NF-kappa-B signaling. This is Protein A52 from Vaccinia virus (strain Western Reserve) (VACV).